The primary structure comprises 130 residues: Glutamate-rich protein 4 (130 aa).

Over residues glutamate 91–glutamine 104 the composition is skewed to acidic residues. Residues glutamate 91–isoleucine 130 are disordered. Residues glutamate 105–glutamate 116 show a composition bias toward basic and acidic residues.

The chain is Glutamate-rich protein 4 (ERICH4) from Homo sapiens (Human).